A 407-amino-acid chain; its full sequence is S-adenosylmethionine synthase (407 aa).

Residue histidine 15 participates in ATP binding. Aspartate 17 provides a ligand contact to Mg(2+). Glutamate 43 serves as a coordination point for K(+). L-methionine contacts are provided by glutamate 56 and glutamine 100. The interval 100–110 is flexible loop; sequence QSPDIAQGVDE. ATP is bound by residues 171-173, 248-249, aspartate 257, 263-264, alanine 280, and lysine 284; these read DGK, KF, and RK. Residue aspartate 257 participates in L-methionine binding. Lysine 288 provides a ligand contact to L-methionine.

This sequence belongs to the AdoMet synthase family. In terms of assembly, homotetramer; dimer of dimers. Requires Mg(2+) as cofactor. The cofactor is K(+).

The protein localises to the cytoplasm. The enzyme catalyses L-methionine + ATP + H2O = S-adenosyl-L-methionine + phosphate + diphosphate. The protein operates within amino-acid biosynthesis; S-adenosyl-L-methionine biosynthesis; S-adenosyl-L-methionine from L-methionine: step 1/1. Its function is as follows. Catalyzes the formation of S-adenosylmethionine (AdoMet) from methionine and ATP. The overall synthetic reaction is composed of two sequential steps, AdoMet formation and the subsequent tripolyphosphate hydrolysis which occurs prior to release of AdoMet from the enzyme. This Synechococcus sp. (strain RCC307) protein is S-adenosylmethionine synthase.